The following is a 448-amino-acid chain: UDP-N-acetylmuramoylalanine--D-glutamate ligase (448 aa).

Gly-116 to Thr-122 contacts ATP.

The protein belongs to the MurCDEF family.

The protein localises to the cytoplasm. The catalysed reaction is UDP-N-acetyl-alpha-D-muramoyl-L-alanine + D-glutamate + ATP = UDP-N-acetyl-alpha-D-muramoyl-L-alanyl-D-glutamate + ADP + phosphate + H(+). It functions in the pathway cell wall biogenesis; peptidoglycan biosynthesis. In terms of biological role, cell wall formation. Catalyzes the addition of glutamate to the nucleotide precursor UDP-N-acetylmuramoyl-L-alanine (UMA). This chain is UDP-N-acetylmuramoylalanine--D-glutamate ligase, found in Pseudomonas fluorescens (strain ATCC BAA-477 / NRRL B-23932 / Pf-5).